A 59-amino-acid polypeptide reads, in one-letter code: Large ribosomal subunit protein uL30 (59 aa).

It belongs to the universal ribosomal protein uL30 family. As to quaternary structure, part of the 50S ribosomal subunit.

The polypeptide is Large ribosomal subunit protein uL30 (Edwardsiella ictaluri (strain 93-146)).